The chain runs to 239 residues: Ribonuclease HII (239 aa).

Residues 30–221 form the RNase H type-2 domain; that stretch reads GPVAGVDEVG…VRRVATRSNG (192 aa). The a divalent metal cation site is built by Asp-36, Glu-37, and Asp-130. The interval 219-239 is disordered; the sequence is SNGAAAAEREADPPQERDGTG. Over residues 225–239 the composition is skewed to basic and acidic residues; sequence AEREADPPQERDGTG.

This sequence belongs to the RNase HII family. Requires Mn(2+) as cofactor. It depends on Mg(2+) as a cofactor.

It is found in the cytoplasm. The enzyme catalyses Endonucleolytic cleavage to 5'-phosphomonoester.. Its function is as follows. Endonuclease that specifically degrades the RNA of RNA-DNA hybrids. This is Ribonuclease HII from Mycobacterium marinum (strain ATCC BAA-535 / M).